The sequence spans 145 residues: Hemoglobin subunit beta (145 aa).

The 145-residue stretch at 1 to 145 (MLTAEEKAAV…VANALAHRYH (145 aa)) folds into the Globin domain. Position 11 is a phosphothreonine (Thr11). Ser43 carries the post-translational modification Phosphoserine. At Lys58 the chain carries N6-acetyllysine. Residue His62 participates in heme b binding. Lys81 bears the N6-acetyllysine mark. His91 serves as a coordination point for heme b. Cys92 bears the S-nitrosocysteine mark.

It belongs to the globin family. In terms of assembly, heterotetramer of two alpha chains and two beta chains. Red blood cells.

Functionally, involved in oxygen transport from the lung to the various peripheral tissues. The chain is Hemoglobin subunit beta (HBB) from Bos mutus grunniens (Wild yak).